The following is a 267-amino-acid chain: Auxin-responsive protein IAA18 (267 aa).

The EAR-like (transcriptional repression) motif lies at leucine 42 to leucine 46. The disordered stretch occupies residues proline 81–proline 101. A PB1 domain is found at glycine 149–threonine 248.

This sequence belongs to the Aux/IAA family. Homodimers and heterodimers. Interacts with TPL.

The protein localises to the nucleus. Functionally, aux/IAA proteins are short-lived transcriptional factors that function as repressors of early auxin response genes at low auxin concentrations. Repression is thought to result from the interaction with auxin response factors (ARFs), proteins that bind to the auxin-responsive promoter element (AuxRE). Formation of heterodimers with ARF proteins may alter their ability to modulate early auxin response genes expression. The polypeptide is Auxin-responsive protein IAA18 (IAA18) (Arabidopsis thaliana (Mouse-ear cress)).